The chain runs to 302 residues: Acetyl-coenzyme A carboxylase carboxyl transferase subunit beta (302 aa).

The 270-residue stretch at 25–294 (VWTKCDSCGQ…PHFDEAAPVS (270 aa)) folds into the CoA carboxyltransferase N-terminal domain. Residues Cys-29, Cys-32, Cys-48, and Cys-51 each contribute to the Zn(2+) site. Residues 29 to 51 (CDSCGQVLYRAELERNLEVCPKC) form a C4-type zinc finger. The segment at 281–302 (NQPQPHFDEAAPVSEQENQADA) is disordered.

This sequence belongs to the AccD/PCCB family. In terms of assembly, acetyl-CoA carboxylase is a heterohexamer composed of biotin carboxyl carrier protein (AccB), biotin carboxylase (AccC) and two subunits each of ACCase subunit alpha (AccA) and ACCase subunit beta (AccD). Zn(2+) is required as a cofactor.

Its subcellular location is the cytoplasm. The enzyme catalyses N(6)-carboxybiotinyl-L-lysyl-[protein] + acetyl-CoA = N(6)-biotinyl-L-lysyl-[protein] + malonyl-CoA. The protein operates within lipid metabolism; malonyl-CoA biosynthesis; malonyl-CoA from acetyl-CoA: step 1/1. In terms of biological role, component of the acetyl coenzyme A carboxylase (ACC) complex. Biotin carboxylase (BC) catalyzes the carboxylation of biotin on its carrier protein (BCCP) and then the CO(2) group is transferred by the transcarboxylase to acetyl-CoA to form malonyl-CoA. This Serratia proteamaculans (strain 568) protein is Acetyl-coenzyme A carboxylase carboxyl transferase subunit beta.